The following is a 243-amino-acid chain: PF03932 family protein CutC (243 aa).

The protein belongs to the CutC family.

Its subcellular location is the cytoplasm. The polypeptide is PF03932 family protein CutC (Parabacteroides distasonis (strain ATCC 8503 / DSM 20701 / CIP 104284 / JCM 5825 / NCTC 11152)).